We begin with the raw amino-acid sequence, 155 residues long: Protein U1 (155 aa).

The protein belongs to the nanovirus U1 protein family.

The chain is Protein U1 (DNA-U1) from Cicer arietinum (Chickpea).